We begin with the raw amino-acid sequence, 105 residues long: uncharacterized protein (105 aa).

Positions 80–105 (TGGPTSSTCTRRSDLATGRGSDRRPD) are disordered.

This is an uncharacterized protein from Micromonospora rosea.